Reading from the N-terminus, the 211-residue chain is Probable chemoreceptor glutamine deamidase CheD (211 aa).

The protein belongs to the CheD family.

The enzyme catalyses L-glutaminyl-[protein] + H2O = L-glutamyl-[protein] + NH4(+). Its function is as follows. Probably deamidates glutamine residues to glutamate on methyl-accepting chemotaxis receptors (MCPs), playing an important role in chemotaxis. The polypeptide is Probable chemoreceptor glutamine deamidase CheD (Hahella chejuensis (strain KCTC 2396)).